The sequence spans 228 residues: ATP synthase subunit a (228 aa).

6 helical membrane passes run 14–34, 71–91, 101–121, 139–159, 165–185, and 188–208; these read YFLL…WLFF, WVPI…LGLL, ISLT…LGFY, FLLP…PIAL, ANLT…WVLM, and VAIA…EIGV.

The protein belongs to the ATPase A chain family. F-type ATPases have 2 components, CF(1) - the catalytic core - and CF(0) - the membrane proton channel. CF(1) has five subunits: alpha(3), beta(3), gamma(1), delta(1), epsilon(1). CF(0) has three main subunits: a, b and c.

It localises to the mitochondrion inner membrane. In terms of biological role, mitochondrial membrane ATP synthase (F(1)F(0) ATP synthase or Complex V) produces ATP from ADP in the presence of a proton gradient across the membrane which is generated by electron transport complexes of the respiratory chain. F-type ATPases consist of two structural domains, F(1) - containing the extramembraneous catalytic core and F(0) - containing the membrane proton channel, linked together by a central stalk and a peripheral stalk. During catalysis, ATP synthesis in the catalytic domain of F(1) is coupled via a rotary mechanism of the central stalk subunits to proton translocation. Key component of the proton channel; it may play a direct role in the translocation of protons across the membrane. In Pisaster ochraceus (Ochre sea star), this protein is ATP synthase subunit a (ATP6).